The following is a 312-amino-acid chain: Pantothenate kinase (312 aa).

97 to 104 (GSVAVGKS) contributes to the ATP binding site.

This sequence belongs to the prokaryotic pantothenate kinase family.

Its subcellular location is the cytoplasm. It catalyses the reaction (R)-pantothenate + ATP = (R)-4'-phosphopantothenate + ADP + H(+). It functions in the pathway cofactor biosynthesis; coenzyme A biosynthesis; CoA from (R)-pantothenate: step 1/5. This is Pantothenate kinase from Mycolicibacterium smegmatis (strain ATCC 700084 / mc(2)155) (Mycobacterium smegmatis).